Here is a 191-residue protein sequence, read N- to C-terminus: Calcium-activated potassium channel subunit beta-1 (191 aa).

The Cytoplasmic portion of the chain corresponds to 1–15 (MGKKLVMAQKRGETR). A helical membrane pass occupies residues 16–36 (ALCLGVAMVMCAVITYYILGT). At 37–157 (TMLPLYQKSV…YQRLYGPQAL (121 aa)) the chain is on the extracellular side. N-linked (GlcNAc...) asparagine glycosylation is found at Asn-80 and Asn-142. The helical transmembrane segment at 158-178 (LASLFWPTFLLTGGLLIIAMV) threads the bilayer. At 179–191 (KINRSLSILAAQK) the chain is on the cytoplasmic side.

Belongs to the KCNMB (TC 8.A.14.1) family. KCNMB1 subfamily. In terms of assembly, interacts with KCNMA1 tetramer. There are probably 4 molecules of KCMNB1 per KCNMA1 tetramer. Post-translationally, N-glycosylated.

It is found in the membrane. Functionally, regulatory subunit of the calcium activated potassium KCNMA1 (maxiK) channel. Modulates the calcium sensitivity and gating kinetics of KCNMA1, thereby contributing to KCNMA1 channel diversity. Increases the apparent Ca(2+)/voltage sensitivity of the KCNMA1 channel. It also modifies KCNMA1 channel kinetics and alters its pharmacological properties. It slows down the activation and the deactivation kinetics of the channel. Acts as a negative regulator of smooth muscle contraction by enhancing the calcium sensitivity to KCNMA1. Its presence is also a requirement for internal binding of the KCNMA1 channel opener dehydrosoyasaponin I (DHS-1) triterpene glycoside and for external binding of the agonist hormone 17-beta-estradiol (E2). Increases the binding activity of charybdotoxin (CTX) toxin to KCNMA1 peptide blocker by increasing the CTX association rate and decreasing the dissociation rate. In Oryctolagus cuniculus (Rabbit), this protein is Calcium-activated potassium channel subunit beta-1 (KCNMB1).